A 330-amino-acid chain; its full sequence is Low-redox potential peroxidase (330 aa).

An N-terminal signal peptide occupies residues 1-24 (MRSSTHIFVSFVVYCGVFVTSAIA). An N-linked (GlcNAc...) asparagine glycan is attached at N27. 3 cysteine pairs are disulfide-bonded: C34–C285, C54–C123, and C251–C314. G69, D71, and S73 together coordinate Ca(2+). Heme b is bound at residue H178. 4 residues coordinate Ca(2+): S179, D196, T198, and D203.

Belongs to the peroxidase family. Ligninase subfamily. Ca(2+) serves as cofactor. Heme b is required as a cofactor.

Its subcellular location is the secreted. The enzyme catalyses 2 a phenolic donor + H2O2 = 2 a phenolic radical donor + 2 H2O. In terms of biological role, can oxidize the lignin redox mediator veratryl alcohol to veratryl aldehyde. May be involved in oxidation of lignocellulose substrates. The chain is Low-redox potential peroxidase (LnP) from Taiwanofungus camphoratus (Poroid brown-rot fungus).